Reading from the N-terminus, the 283-residue chain is GTPase Era (283 aa).

Residues 7–175 (YCGHVIIVGK…KNIIKSYLPE (169 aa)) form the Era-type G domain. The segment at 15 to 22 (GKANVGKS) is G1. A GTP-binding site is contributed by 15–22 (GKANVGKS). The segment at 41 to 45 (NTTQS) is G2. The tract at residues 62-65 (DTPG) is G3. Residues 62-66 (DTPGV) and 124-127 (NKID) contribute to the GTP site. Residues 124-127 (NKID) form a G4 region. The interval 154–156 (ISA) is G5. Residues 198 to 283 (IREQLILFLG…HLVLWVKDKN (86 aa)) enclose the KH type-2 domain.

It belongs to the TRAFAC class TrmE-Era-EngA-EngB-Septin-like GTPase superfamily. Era GTPase family. Monomer.

Its subcellular location is the cytoplasm. It is found in the cell membrane. Its function is as follows. An essential GTPase that binds both GDP and GTP, with rapid nucleotide exchange. Plays a role in 16S rRNA processing and 30S ribosomal subunit biogenesis and possibly also in cell cycle regulation and energy metabolism. In Buchnera aphidicola subsp. Acyrthosiphon pisum (strain APS) (Acyrthosiphon pisum symbiotic bacterium), this protein is GTPase Era.